Consider the following 153-residue polypeptide: Prefoldin subunit alpha (153 aa).

The protein belongs to the prefoldin subunit alpha family. Heterohexamer of two alpha and four beta subunits.

It localises to the cytoplasm. Its function is as follows. Molecular chaperone capable of stabilizing a range of proteins. Seems to fulfill an ATP-independent, HSP70-like function in archaeal de novo protein folding. This chain is Prefoldin subunit alpha, found in Methanothrix thermoacetophila (strain DSM 6194 / JCM 14653 / NBRC 101360 / PT) (Methanosaeta thermophila).